Here is a 395-residue protein sequence, read N- to C-terminus: MSFKTLDDIGDLTGKTVLVREDLNVPMQDGAVTDDTRLRATIATLNELSDKGAKVLVLAHFGRPKGQPSEEFSLKKLAAPLAHVLGRPVSYIDWESDKAAVAALTPGAIAVLENTRFFDGEEKNDPAVIERFASLGDIYVNDAFSAAHRAHASTEGLAHVLPAYAGRAMEAELKALQKALGEPERPVAAVVGGAKVSTKLDVLKHLVSKVDHLIIGGGMANTFLAARGVNVGKSLCEHDLTGTAEEILDNADKSGCTVHLPYDVVVSKEFTANPPSLRTCNVHEVAADEMILDVGPAAVEALADVLKTCKTLVWNGPMGAFETEPFDAATVALARTAAALTKEGSLVSVAGGGDTVAALNHAGVVGDFSYISTAGGAFLEWMEGKELPGVAALEG.

Substrate contacts are provided by residues 22–24 (DLN), Arg-37, 60–63 (HFGR), Arg-116, and Arg-149. ATP is bound by residues Lys-199, Glu-322, and 352–355 (GGDT).

The protein belongs to the phosphoglycerate kinase family. In terms of assembly, monomer.

It localises to the cytoplasm. It catalyses the reaction (2R)-3-phosphoglycerate + ATP = (2R)-3-phospho-glyceroyl phosphate + ADP. The protein operates within carbohydrate degradation; glycolysis; pyruvate from D-glyceraldehyde 3-phosphate: step 2/5. The sequence is that of Phosphoglycerate kinase from Novosphingobium aromaticivorans (strain ATCC 700278 / DSM 12444 / CCUG 56034 / CIP 105152 / NBRC 16084 / F199).